A 218-amino-acid polypeptide reads, in one-letter code: Heart- and neural crest derivatives-expressed protein 1 (218 aa).

3 disordered regions span residues 1–23 (MNLV…HPAH), 56–112 (APDF…RTES), and 172–203 (ADGG…RIKG). Residues 8–21 (AHHHHHHHHHHPHP) show a composition bias toward basic residues. The segment covering 68–92 (AAAAAASYGPDARPGQSPGRLEALG) has biased composition (low complexity). Residues 95 to 107 (LGRRKGSGPKKER) are compositionally biased toward basic residues. The 53-residue stretch at 97 to 149 (RRKGSGPKKERRRTESINSAFAELRECIPNVPADTKLSKIKTLRLATSYIAYL) folds into the bHLH domain. Residue Thr-110 is modified to Phosphothreonine; by PLK4. Ser-112 carries the phosphoserine; by PLK4 modification.

As to quaternary structure, efficient DNA binding requires dimerization with another bHLH protein. Forms homodimers and heterodimers with TCF3 gene products E12 and E47, HAND2 and HEY1, HEY2 and HEYL (hairy-related transcription factors). Interacts with MDFIC. Interacts with SOX15; the interaction enhances HAND1-induced differentiation of trophoblast giant cells. Post-translationally, phosphorylation by PLK4 disrupts the interaction with MDFIC and leads to translocation into the nucleoplasm, allowing dimerization and transcription factor activity.

It localises to the nucleus. Its subcellular location is the nucleoplasm. It is found in the nucleolus. In terms of biological role, transcription factor that plays an essential role in both trophoblast giant cell differentiation and in cardiac morphogenesis. Binds the DNA sequence 5'-NRTCTG-3' (non-canonical E-box). Acts as a transcriptional repressor of SOX15. In the adult, could be required for ongoing expression of cardiac-specific genes. The chain is Heart- and neural crest derivatives-expressed protein 1 (HAND1) from Bos taurus (Bovine).